Consider the following 3268-residue polypeptide: E3 ubiquitin-protein ligase TOM1 (3268 aa).

Position 1890 is a phosphoserine (S1890). Disordered stretches follow at residues 1941–2023 (VFSD…EDDA) and 2038–2083 (GYDV…MGDS). Residues 1942–1955 (FSDEDDDMGEEDAD) are compositionally biased toward acidic residues. A compositionally biased stretch (polar residues) spans 1967 to 1976 (SSEMQSSTAD). Acidic residues-rich tracts occupy residues 1978-1988 (TDVDYEVDDAD), 2042-2053 (DLSDYDVDESDW), and 2063-2074 (SDEDSESSEDEP). T2096 carries the phosphothreonine modification. Phosphoserine is present on residues S2119, S2376, S2406, and S2418. Residues 2416–2426 (DVSNNDEEVEN) are compositionally biased toward acidic residues. A disordered region spans residues 2416–2443 (DVSNNDEEVENGLDHGNSNDRNNADPEK). In terms of domain architecture, HECT spans 2932–3268 (TNDEIKNSKL…NEGHEGFGLA (337 aa)). C3235 serves as the catalytic Glycyl thioester intermediate.

It belongs to the UPL family. TOM1/PTR1 subfamily. In terms of assembly, interacts with the ADA3/NGG1 subunit of the SAGA complex. Interacts with KRR1.

The protein localises to the nucleus. It is found in the nucleolus. The catalysed reaction is S-ubiquitinyl-[E2 ubiquitin-conjugating enzyme]-L-cysteine + [acceptor protein]-L-lysine = [E2 ubiquitin-conjugating enzyme]-L-cysteine + N(6)-ubiquitinyl-[acceptor protein]-L-lysine.. It participates in protein modification; protein ubiquitination. Its function is as follows. Probable ubiquitin ligase protein involved in many cellular processes, such as transcription regulation, maintenance of nuclear structure, cell cycle, mRNA export and rRNA maturation. E3 ubiquitin ligase proteins mediate ubiquitination and subsequent proteasomal degradation of target proteins. Involved in transcription regulation by interacting, and probably mediating, ubiquitination of some subunit of the SAGA complex. Required for SPT7 ubiquitination. Participates in mRNA export from the nucleus by regulating the transport of hnRNP proteins. Required for the shuttling of hnRNP protein NAB2, probably by mediating ubiquitination of a protein associated with NAB2. Also required for full induction of the general stress and heat-shock responses. Involved in 18S rRNA maturation by affecting several early steps in the rRNA processing pathway. This chain is E3 ubiquitin-protein ligase TOM1 (TOM1), found in Saccharomyces cerevisiae (strain ATCC 204508 / S288c) (Baker's yeast).